We begin with the raw amino-acid sequence, 189 residues long: uncharacterized protein (189 aa).

This sequence to M.jannaschii MJ1461.

This is an uncharacterized protein from Methanocaldococcus jannaschii (strain ATCC 43067 / DSM 2661 / JAL-1 / JCM 10045 / NBRC 100440) (Methanococcus jannaschii).